The chain runs to 147 residues: Fluoride-specific ion channel FluC 1 (147 aa).

The next 4 membrane-spanning stretches (helical) occupy residues Tyr-29–Leu-49, Ile-61–Phe-81, Ala-90–Ile-110, and Phe-118–Val-138. Na(+) is bound by residues Gly-97 and Thr-100.

This sequence belongs to the fluoride channel Fluc/FEX (TC 1.A.43) family.

It is found in the cell membrane. The enzyme catalyses fluoride(in) = fluoride(out). Na(+) is not transported, but it plays an essential structural role and its presence is essential for fluoride channel function. Fluoride-specific ion channel. Important for reducing fluoride concentration in the cell, thus reducing its toxicity. This chain is Fluoride-specific ion channel FluC 1, found in Staphylococcus aureus (strain Mu50 / ATCC 700699).